A 102-amino-acid polypeptide reads, in one-letter code: Small ribosomal subunit protein uS10 (102 aa).

The protein belongs to the universal ribosomal protein uS10 family. In terms of assembly, part of the 30S ribosomal subunit.

In terms of biological role, involved in the binding of tRNA to the ribosomes. This Methylobacterium nodulans (strain LMG 21967 / CNCM I-2342 / ORS 2060) protein is Small ribosomal subunit protein uS10.